Here is a 433-residue protein sequence, read N- to C-terminus: MEKITLNPIARVEGTVNLPGSKSLSNRALLLAALAKGTTKVTNLLDSDDVRHMLNALKRLGVSYTLSDDKTVCEVQGLGRAFEWQNGLSLFLGNAGTAMRPLTAALCLANSGNESPAEIVLTGEPRMKERPIKHLVDALLQAGAEIEYLEQDGYPPLAIRNKGLHGGKVKIDGSVSSQFLTALLMAAPMSAADTEIEIIGDLVSKPYIDITLNMMKIFGVEVENRNYQRFTVKGCQQYQSPKTFLVEGDASSASYFLAAGAIKGCVKVTGVGKNSIQGDRLFADVLTAMGAKITWGEDFIRAEQGELSGVDMDMNHIPDAAMTIATAALFAKGETVIRNIYNWRVKETDRLAAMATELRKVGATVEEGEDFIRIQPLPLAEFKHAEIETYNDHRMAMCFALIALSDTPVTILDPKCTAKTFPTFFDEFSRISQ.

Residues lysine 22, serine 23, and arginine 27 each contribute to the 3-phosphoshikimate site. Lysine 22 lines the phosphoenolpyruvate pocket. Residues glycine 96 and arginine 130 each coordinate phosphoenolpyruvate. Residues serine 176, serine 177, glutamine 178, serine 204, aspartate 319, asparagine 342, and lysine 346 each coordinate 3-phosphoshikimate. Glutamine 178 serves as a coordination point for phosphoenolpyruvate. The Proton acceptor role is filled by aspartate 319. Phosphoenolpyruvate contacts are provided by arginine 350, arginine 394, and lysine 419.

The protein belongs to the EPSP synthase family. Monomer.

The protein localises to the cytoplasm. The catalysed reaction is 3-phosphoshikimate + phosphoenolpyruvate = 5-O-(1-carboxyvinyl)-3-phosphoshikimate + phosphate. The protein operates within metabolic intermediate biosynthesis; chorismate biosynthesis; chorismate from D-erythrose 4-phosphate and phosphoenolpyruvate: step 6/7. Functionally, catalyzes the transfer of the enolpyruvyl moiety of phosphoenolpyruvate (PEP) to the 5-hydroxyl of shikimate-3-phosphate (S3P) to produce enolpyruvyl shikimate-3-phosphate and inorganic phosphate. The chain is 3-phosphoshikimate 1-carboxyvinyltransferase from Actinobacillus succinogenes (strain ATCC 55618 / DSM 22257 / CCUG 43843 / 130Z).